We begin with the raw amino-acid sequence, 681 residues long: DNA-directed RNA polymerase subunit beta' (681 aa).

Residues Cys-69, Cys-71, Cys-87, and Cys-90 each coordinate Zn(2+). Residues Asp-489, Asp-491, and Asp-493 each coordinate Mg(2+).

This sequence belongs to the RNA polymerase beta' chain family. RpoC1 subfamily. As to quaternary structure, in plastids the minimal PEP RNA polymerase catalytic core is composed of four subunits: alpha, beta, beta', and beta''. When a (nuclear-encoded) sigma factor is associated with the core the holoenzyme is formed, which can initiate transcription. Requires Mg(2+) as cofactor. It depends on Zn(2+) as a cofactor.

The protein resides in the plastid. Its subcellular location is the chloroplast. It carries out the reaction RNA(n) + a ribonucleoside 5'-triphosphate = RNA(n+1) + diphosphate. Functionally, DNA-dependent RNA polymerase catalyzes the transcription of DNA into RNA using the four ribonucleoside triphosphates as substrates. The protein is DNA-directed RNA polymerase subunit beta' of Atropa belladonna (Belladonna).